We begin with the raw amino-acid sequence, 262 residues long: MASFGWKRKIGEKVSKVTSQQFEAEAADEKDVVDNDEGNWLHAIKRRKEILLEGCAEKSKQLKDEGASLAENKRYREAIQKWDEALQLTPNDATLYEMKSQVLMSLHEMFPAVHAAEMAVQQNPHSWESWQTLGRAQLGLGEIILAIRSFQVALHIYPMNPEIWKEDLSWARTLQEQQKVAQRIKKSEAPAEVTHFSPKSIPDYDFESDEIVAVCAAIAEKEKTVSANKTMVIVSASGAIETVTEKEDGATPPDGSVFIKAR.

TPR repeat units follow at residues 59–92 (SKQL…TPND), 93–126 (ATLY…NPHS), and 127–160 (WESW…YPMN). S197 is subject to Phosphoserine. A Phosphothreonine modification is found at T251.

The sequence is that of Tetratricopeptide repeat protein 33 (TTC33) from Homo sapiens (Human).